The chain runs to 64 residues: Large ribosomal subunit protein bL35 (64 aa).

2 stretches are compositionally biased toward basic residues: residues 1 to 15 and 23 to 42; these read MPKA…KRFR and VRQK…KRTR. The disordered stretch occupies residues 1-45; that stretch reads MPKAKTHSGASKRFRTTGSGKVVRQKANRRHLLEHKPTKRTRRLD.

It belongs to the bacterial ribosomal protein bL35 family.

The chain is Large ribosomal subunit protein bL35 from Mycolicibacterium vanbaalenii (strain DSM 7251 / JCM 13017 / BCRC 16820 / KCTC 9966 / NRRL B-24157 / PYR-1) (Mycobacterium vanbaalenii).